The sequence spans 297 residues: Probable porphobilinogen deaminase (297 aa).

Cysteine 233 is subject to S-(dipyrrolylmethanemethyl)cysteine.

Belongs to the HMBS family. Dipyrromethane is required as a cofactor.

It carries out the reaction 4 porphobilinogen + H2O = hydroxymethylbilane + 4 NH4(+). The protein operates within porphyrin-containing compound metabolism; protoporphyrin-IX biosynthesis; coproporphyrinogen-III from 5-aminolevulinate: step 2/4. In terms of biological role, tetrapolymerization of the monopyrrole PBG into the hydroxymethylbilane pre-uroporphyrinogen in several discrete steps. This Thermoplasma volcanium (strain ATCC 51530 / DSM 4299 / JCM 9571 / NBRC 15438 / GSS1) protein is Probable porphobilinogen deaminase.